The sequence spans 837 residues: MKDFVLLNDKILPNDVKCYSCCTTMDLIALVTKDDQIVIHRFLTWQKLFTINHMSTTINDNNTNNNNNNNNNNNNNNNDNNNDNDKSNKSIVSIQWSPNGKMISIGCEDGSIFIYNIENAKLINKSHNHKHPIHKLAWIKEVSQQRSQQQQQQQQQQQQQQQQQQQQQQQQQQQQQQQQQQQQQQNKNGSTKCNNNYVSPPLFLSQIKQNMNLFPSISYYFENSKEENIYLGGDIYDRPFDILICCDSIGVISLLAFGLFKIVTIDLLSLLKQKYSNTHFLIKPSKSLKILDITLTESLNKLSVMIETDNGLFLSVTIDTSILLEKRNEIHEISLQYFLLFQLQQSLDIHIKEITEKWKETQQQLSTKWVEFEKVLSDYGFSSSIEQELIDLLMCGVPSPPTNQFIVNNINIKKLKLTESNCNSIREILIKYILPSFLNIFHIITVLHNNSLENDGYKGLLDTNTVKNILDYCGSFGMRLQSLETLICGIESHYTSFFSWLYKVQCTLNEIQPDRKLSLPFNELSIMSLLKKGLKFDLLFSTSTLFSSSSSSSPSSPPSNNNSPTFSSSSSINNNNNNNNNELNQSGNIGFSNNNENLEFQYKDLKGNFHDLFKDFSSKIFETFNEITIVLPSLFKFENVIPFCLYDKNDTSVSHKFNCSLISHPNDTIYLSIYTTLSNSNRLFICKREDKLNWSFTCYQLNEKYSILDCKFYNNSSLMALVSEDIIKANQKKSTRKNTYLKQYQYKTDDNDDSDNREYIKLDVNIPQSTILLDLLDSFKSREIILKSRISPITFELSTSRKISATFIGKRRVALYDLAEDEEEEEEGEEEDICLVR.

2 stretches are compositionally biased toward low complexity: residues 59-81 (NDNNTNNNNNNNNNNNNNNNDNN) and 547-581 (SSSSSSSPSSPPSNNNSPTFSSSSSINNNNNNNNN). Disordered regions lie at residues 59–89 (NDNNTNNNNNNNNNNNNNNNDNNNDNDKSNK) and 547–588 (SSSS…QSGN).

It belongs to the APC4 family. In terms of assembly, the APC/C is composed of at least 13 subunits that stay tightly associated throughout the cell cycle: anapc1, anapc2, anapc3, anapc4, anapc5, anapc6, anapc7, anapc8, anapc10, anapc11, cdc20, cdc26 and cdh1.

It localises to the nucleus. It functions in the pathway protein modification; protein ubiquitination. In terms of biological role, component of the anaphase promoting complex/cyclosome (APC/C), a cell cycle-regulated E3 ubiquitin-protein ligase complex that controls progression through mitosis and the G1 phase of the cell cycle. This Dictyostelium discoideum (Social amoeba) protein is Anaphase-promoting complex subunit 4 (anapc4).